Here is a 451-residue protein sequence, read N- to C-terminus: Tubulin alpha-2 chain (451 aa).

Glutamine 11 provides a ligand contact to GTP. Lysine 40 bears the N6-acetyllysine mark. Residues glutamate 71, glycine 144, threonine 145, threonine 179, asparagine 206, and asparagine 228 each contribute to the GTP site. Mg(2+) is bound at residue glutamate 71. Glutamate 254 is an active-site residue.

Belongs to the tubulin family. Dimer of alpha and beta chains. A typical microtubule is a hollow water-filled tube with an outer diameter of 25 nm and an inner diameter of 15 nM. Alpha-beta heterodimers associate head-to-tail to form protofilaments running lengthwise along the microtubule wall with the beta-tubulin subunit facing the microtubule plus end conferring a structural polarity. Microtubules usually have 13 protofilaments but different protofilament numbers can be found in some organisms and specialized cells. It depends on Mg(2+) as a cofactor. Post-translationally, undergoes a tyrosination/detyrosination cycle, the cyclic removal and re-addition of a C-terminal tyrosine residue by the enzymes tubulin tyrosine carboxypeptidase (TTCP) and tubulin tyrosine ligase (TTL), respectively. In terms of processing, acetylation of alpha chains at Lys-40 stabilizes microtubules and affects affinity and processivity of microtubule motors. This modification has a role in multiple cellular functions, ranging from cell motility, cell cycle progression or cell differentiation to intracellular trafficking and signaling.

The protein localises to the cytoplasm. The protein resides in the cytoskeleton. It carries out the reaction GTP + H2O = GDP + phosphate + H(+). Tubulin is the major constituent of microtubules, a cylinder consisting of laterally associated linear protofilaments composed of alpha- and beta-tubulin heterodimers. Microtubules grow by the addition of GTP-tubulin dimers to the microtubule end, where a stabilizing cap forms. Below the cap, tubulin dimers are in GDP-bound state, owing to GTPase activity of alpha-tubulin. The chain is Tubulin alpha-2 chain (TUBA2) from Hordeum vulgare (Barley).